A 449-amino-acid chain; its full sequence is Glucose-6-phosphate isomerase (449 aa).

Glu291 functions as the Proton donor in the catalytic mechanism. Residues His312 and Lys426 contribute to the active site.

This sequence belongs to the GPI family.

Its subcellular location is the cytoplasm. The catalysed reaction is alpha-D-glucose 6-phosphate = beta-D-fructose 6-phosphate. It functions in the pathway carbohydrate biosynthesis; gluconeogenesis. It participates in carbohydrate degradation; glycolysis; D-glyceraldehyde 3-phosphate and glycerone phosphate from D-glucose: step 2/4. Functionally, catalyzes the reversible isomerization of glucose-6-phosphate to fructose-6-phosphate. This is Glucose-6-phosphate isomerase from Clostridium botulinum (strain Eklund 17B / Type B).